The chain runs to 209 residues: Small ribosomal subunit protein uS4 (209 aa).

Residues 23 to 46 (SRNPLLKKPHPPGQHGMQRKKKSD) are disordered. The 64-residue stretch at 93–156 (CRLDNMVYRM…RKLQSVQESL (64 aa)) folds into the S4 RNA-binding domain.

This sequence belongs to the universal ribosomal protein uS4 family. In terms of assembly, part of the 30S ribosomal subunit. Contacts protein S5. The interaction surface between S4 and S5 is involved in control of translational fidelity.

Its function is as follows. One of the primary rRNA binding proteins, it binds directly to 16S rRNA where it nucleates assembly of the body of the 30S subunit. In terms of biological role, with S5 and S12 plays an important role in translational accuracy. This is Small ribosomal subunit protein uS4 from Chlamydia felis (strain Fe/C-56) (Chlamydophila felis).